A 415-amino-acid chain; its full sequence is MTFDKIKVENPIVEMDGDEMTRVIWKSIKDKLICPFLELDIKYFDLGLPHRDATDDKVTVESAEATQKYNVAIKCATITPDEARVKEFNLKSMWRSPNGTIRNILNGTVFREPIMCKNIPRLVPGWTKPICIGRHAFGDQYRATDTVIQGAGKLKLVFVPEGTDEKTEFEVYNFTGAGGVALSMYNTDESVRSFAEASMNMAYQKKWPLYLSTKNTILKKYDGRFKDIFQEVYEANWKSKYEEAGIWYEHRLIDDMAAYALKSEGGYVWACKNYDGDVQSDFLAQGFGSLGLMTSVLVCPDGKTIEAEAAHGTVTRHYRVHQKGGETSTNSIASIFAWTRGLAHRATLDNNERLLDFTEKLEAACIGAVESGKMTKDLALIIHGSKLSRDHYLNTEEFIDAVADELKARLLKAKA.

Residues threonine 77 to threonine 79 and arginine 84 each bind NADP(+). Residue threonine 79 participates in substrate binding. Substrate is bound by residues serine 96 to arginine 102, arginine 111, and arginine 134. Aspartate 254 is a Mn(2+) binding site. Lysine 262 contacts NADP(+). Aspartate 277 is a binding site for Mn(2+). Residues glycine 312 to histidine 317 and asparagine 330 contribute to the NADP(+) site.

It belongs to the isocitrate and isopropylmalate dehydrogenases family. Heterodimer. Mg(2+) is required as a cofactor. The cofactor is Mn(2+).

The protein resides in the cytoplasm. The enzyme catalyses D-threo-isocitrate + NADP(+) = 2-oxoglutarate + CO2 + NADPH. Its function is as follows. May supply 2-oxoglutarate for amino acid biosynthesis and ammonia assimilation via the glutamine synthetase/glutamate synthase (GS/GOGAT) pathway. This chain is Isocitrate dehydrogenase [NADP], found in Nicotiana tabacum (Common tobacco).